A 243-amino-acid polypeptide reads, in one-letter code: ABC transporter arginine-binding protein 1 (243 aa).

A signal peptide spans 1–19 (MKKLVLAALLASFTFGASA).

It belongs to the bacterial solute-binding protein 3 family. As to quaternary structure, the complex is composed of two ATP-binding proteins (ArtP), two transmembrane proteins (ArtM and ArtQ) and two solute-binding proteins (ArtJ and ArtI).

Its subcellular location is the periplasm. Functionally, part of the ABC transporter complex ArtPIQMJ involved in arginine transport. Binds L-arginine with high affinity. The polypeptide is ABC transporter arginine-binding protein 1 (artJ) (Escherichia coli (strain K12)).